A 208-amino-acid chain; its full sequence is Putative dioxygenase RF_0617 (208 aa).

It belongs to the intradiol ring-cleavage dioxygenase family.

This is Putative dioxygenase RF_0617 from Rickettsia felis (strain ATCC VR-1525 / URRWXCal2) (Rickettsia azadi).